The sequence spans 238 residues: Beta-glucanase (238 aa).

Positions 1–26 (MMKKKSWFTLMITGVISLFFSVSAFA) are cleaved as a signal peptide. The region spanning 29-238 (VFWEPLSYFN…EYDWVKYTSN (210 aa)) is the GH16 domain. Cys56 and Cys85 are oxidised to a cystine. Residue Glu129 is the Nucleophile of the active site. The Proton donor role is filled by Glu133.

The protein belongs to the glycosyl hydrolase 16 family.

The enzyme catalyses Hydrolysis of (1-&gt;4)-beta-D-glucosidic linkages in beta-D-glucans containing (1-&gt;3)- and (1-&gt;4)-bonds.. This Paenibacillus polymyxa (Bacillus polymyxa) protein is Beta-glucanase (gluB).